The sequence spans 149 residues: Large ribosomal subunit protein bL9 (149 aa).

It belongs to the bacterial ribosomal protein bL9 family.

Functionally, binds to the 23S rRNA. This is Large ribosomal subunit protein bL9 from Bacillus velezensis (strain DSM 23117 / BGSC 10A6 / LMG 26770 / FZB42) (Bacillus amyloliquefaciens subsp. plantarum).